Reading from the N-terminus, the 412-residue chain is NADH-quinone oxidoreductase subunit D (412 aa).

The protein belongs to the complex I 49 kDa subunit family. As to quaternary structure, NDH-1 is composed of 14 different subunits. Subunits NuoB, C, D, E, F, and G constitute the peripheral sector of the complex.

The protein resides in the cell inner membrane. The catalysed reaction is a quinone + NADH + 5 H(+)(in) = a quinol + NAD(+) + 4 H(+)(out). Functionally, NDH-1 shuttles electrons from NADH, via FMN and iron-sulfur (Fe-S) centers, to quinones in the respiratory chain. The immediate electron acceptor for the enzyme in this species is believed to be a menaquinone. Couples the redox reaction to proton translocation (for every two electrons transferred, four hydrogen ions are translocated across the cytoplasmic membrane), and thus conserves the redox energy in a proton gradient. This is NADH-quinone oxidoreductase subunit D from Flavobacterium psychrophilum (strain ATCC 49511 / DSM 21280 / CIP 103535 / JIP02/86).